The primary structure comprises 1104 residues: MNRKKGDKGFESPRPYKLTHQVVCINNINFQRKSVVGFVELTIFPTVANLNRIKLNSKQCRIYRVRINDLEAAFIYNDPTLEVCHSESKQRNLNYFSNAYAAAVSAVDPDAGNGELCIKVPSELWKHVDELKVLKIHINFSLDQPKGGLHFVVPSVEGSMAERGAHVFSCGYQNSTRFWFPCVDSYSELCTWKLEFTVDAAMVAVSNGDLVETVYTHDMRKKTFHYMLTIPTAASNISLAIGPFEILVDPYMHEVTHFCLPQLLPLLKHTTSYIHEVFEFYEEILTCRYPYSCFKTVFIDEAYVEVAAYASMSIFSTNLLHSAMIIDETPLTRRCLAQALAQQFFGCFISRMSWSDEWVLKGISGYIYGLWMKKTFGVNEYHHWIKEELDKIVAYELKTGGVLLHPIFGGGKEKDNPASHLHFSIKHPHTLSWEYYTMFQCKAHLVMRLIENRISMEFMLQVFNKLLSLASTASSQKFQSHMWSQMLVSTYGFLKSISNVSGKDIQPLIKQWLDQSGVVKFYGSFAFNRKRNVLELEIKQDYTSPGTQKYVGPLKVTVQELDGSFNHTLQIEENSLKHDIPCHSKSRRNKKKKIPLMNGEEVDMDLSAMEADSPLLWIRIDPDMSVLRKVEFEQADFMWQYELRYERDVVAQQESILALEKFPTPASRLALTDILEQEQCFYRVRMSACFCLAKIANSMVSTWTGPPAMKSLFTRMFCCKTCPNIVKTNNFMSFQSYFLQKTMPVAMALLRDVHNLCPKEVLTFILDLIKYNDNRKNKFSDNYYRAEMIDALANSVTPAVSVNNEVRTLDNLNPDVRLILEEITRFLNMEKLLPSYRHTITVSCLRAIRVLQKNGHVPSDASLFKSYAEYGHFVDIRIAALEAVVDYTKVDRSYEELQWLLNMIQTDPVPYVRHKILNMLTKNPPFTKNMESPLCNEALVDQLWKLMNSGTAHDWRLRCGAVDLYFTLFGLSRPSCLPLPELGLVLNLKEKKAVLNPTIIPEAGVGNQFSSSQDEEEVDMDTVHDSQAFISHHLNMLERPSTPGLSKYRPHHHHHHHEHKKKKKKHKHKHKHKHKHDSKDKDREPFAFSSPASGRSVRSPSLSD.

The interval 1040 to 1104 (PSTPGLSKYR…RSVRSPSLSD (65 aa)) is disordered. Residues 1048 to 1076 (YRPHHHHHHHEHKKKKKKHKHKHKHKHKH) are compositionally biased toward basic residues. A phosphoserine mark is found at Ser1090, Ser1093, Ser1099, Ser1101, and Ser1103. Over residues 1090–1104 (SPASGRSVRSPSLSD) the composition is skewed to polar residues.

The protein belongs to the TAF2 family. Component of the TFIID basal transcription factor complex, composed of TATA-box-binding protein TBP, and a number of TBP-associated factors (TAFs), including TAF1, TAF2, TAF3, TAF4, TAF5, TAF6, TAF7, TAF8, TAF9, TAF10, TAF11, TAF12 and TAF13. Interacts with TAF2C1. Component of the TFTC-HAT complex.

It localises to the nucleus. The TFIID basal transcription factor complex plays a major role in the initiation of RNA polymerase II (Pol II)-dependent transcription. TFIID recognizes and binds promoters with or without a TATA box via its subunit TBP, a TATA-box-binding protein, and promotes assembly of the pre-initiation complex (PIC). The TFIID complex consists of TBP and TBP-associated factors (TAFs), including TAF1, TAF2, TAF3, TAF4, TAF5, TAF6, TAF7, TAF8, TAF9, TAF10, TAF11, TAF12 and TAF13. TAF2 forms a promoter DNA binding subcomplex of TFIID, together with TAF7 and TAF1. The sequence is that of Transcription initiation factor TFIID subunit 2 (Taf2) from Mus musculus (Mouse).